We begin with the raw amino-acid sequence, 259 residues long: Haloacid dehalogenase-like hydrolase domain-containing protein 2 (259 aa).

2 residues coordinate Mg(2+): aspartate 13 and serine 15. Substrate-binding positions include 13–15 (DLS) and 46–47 (TN). A coiled-coil region spans residues 47–71 (NTTKESKQDLLERLKKLEFDISEDE). Residue lysine 50 is modified to N6-succinyllysine. Lysine 179 lines the substrate pocket. Aspartate 204 serves as a coordination point for Mg(2+).

Belongs to the HAD-like hydrolase superfamily. It depends on Mg(2+) as a cofactor.

In Bos taurus (Bovine), this protein is Haloacid dehalogenase-like hydrolase domain-containing protein 2 (HDHD2).